Reading from the N-terminus, the 152-residue chain is Stigma-specific STIG1-like protein 1 (152 aa).

An N-terminal signal peptide occupies residues 1-19 (MAFVKLLVSIAITTAITIA).

Belongs to the STIG1 family.

The sequence is that of Stigma-specific STIG1-like protein 1 from Arabidopsis thaliana (Mouse-ear cress).